Here is a 658-residue protein sequence, read N- to C-terminus: Protein cueball (658 aa).

Over 1–543 (MSGVTARMEN…SYCKNSFNRT (543 aa)) the chain is Extracellular. Asn-25 and Asn-122 each carry an N-linked (GlcNAc...) asparagine glycan. LDL-receptor class B repeat units lie at residues 100–142 (RKLY…NHDL), 152–195 (RHLY…DHYS), and 196–241 (NRIY…NSRY). 3 EGF-like domains span residues 352–384 (EIPI…FEGE), 387–422 (DRSK…KRCE), and 458–495 (EEYT…KRCE). 8 disulfides stabilise this stretch: Cys-356–Cys-365, Cys-360–Cys-375, Cys-391–Cys-401, Cys-395–Cys-410, Cys-412–Cys-421, Cys-462–Cys-472, Cys-466–Cys-483, and Cys-485–Cys-494. N-linked (GlcNAc...) asparagine glycosylation is found at Asn-400 and Asn-415. N-linked (GlcNAc...) asparagine glycosylation is present at Asn-476. Residue Asn-541 is glycosylated (N-linked (GlcNAc...) asparagine). A helical transmembrane segment spans residues 544-564 (VVYASLAFAASLFILMVILLI). The Cytoplasmic segment spans residues 565–658 (VRRFYEEGRP…SCAGGDKNLP (94 aa)).

It belongs to the cueball family.

Its subcellular location is the cell membrane. Has a role in spermatogenesis and oogenesis. In Culex quinquefasciatus (Southern house mosquito), this protein is Protein cueball.